Consider the following 283-residue polypeptide: Quinate/shikimate dehydrogenase (NAD(+)) (283 aa).

Ser17, Thr69, Lys73, Asn94, and Asp110 together coordinate shikimate. Residues 17–19, Thr69, Lys73, Asn94, and Asp110 each bind L-quinate; that span reads SRT. The active-site Proton acceptor is Lys73. NAD(+) contacts are provided by residues 137 to 138, Asp158, Arg163, 203 to 206, Ala213, Val228, and Gly251; these read GV and PMGM. Gln258 is a shikimate binding site. Residue Gln258 participates in L-quinate binding.

It belongs to the shikimate dehydrogenase family. As to quaternary structure, homodimer.

The enzyme catalyses L-quinate + NAD(+) = 3-dehydroquinate + NADH + H(+). The catalysed reaction is shikimate + NAD(+) = 3-dehydroshikimate + NADH + H(+). The protein operates within metabolic intermediate biosynthesis; chorismate biosynthesis; chorismate from D-erythrose 4-phosphate and phosphoenolpyruvate: step 4/7. It participates in aromatic compound metabolism; 3,4-dihydroxybenzoate biosynthesis; 3-dehydroquinate from D-quinate (NAD(+) route). Its function is as follows. Involved in the biosynthesis of the chorismate, which leads to the biosynthesis of aromatic amino acids, and plays a key role in the quinate degradation pathway. Catalyzes the NAD(+)-dependent oxidation of both quinate and shikimate to 3-dehydroquinate and 3-dehydroshikimate, respectively. It can only use NAD. This Corynebacterium glutamicum (strain ATCC 13032 / DSM 20300 / JCM 1318 / BCRC 11384 / CCUG 27702 / LMG 3730 / NBRC 12168 / NCIMB 10025 / NRRL B-2784 / 534) protein is Quinate/shikimate dehydrogenase (NAD(+)).